Reading from the N-terminus, the 114-residue chain is Phosphoribosyl-ATP pyrophosphatase (114 aa).

It belongs to the PRA-PH family.

It localises to the cytoplasm. It catalyses the reaction 1-(5-phospho-beta-D-ribosyl)-ATP + H2O = 1-(5-phospho-beta-D-ribosyl)-5'-AMP + diphosphate + H(+). Its pathway is amino-acid biosynthesis; L-histidine biosynthesis; L-histidine from 5-phospho-alpha-D-ribose 1-diphosphate: step 2/9. The protein is Phosphoribosyl-ATP pyrophosphatase of Leuconostoc mesenteroides subsp. mesenteroides (strain ATCC 8293 / DSM 20343 / BCRC 11652 / CCM 1803 / JCM 6124 / NCDO 523 / NBRC 100496 / NCIMB 8023 / NCTC 12954 / NRRL B-1118 / 37Y).